The primary structure comprises 101 residues: Small ribosomal subunit protein uS14 (101 aa).

It belongs to the universal ribosomal protein uS14 family. As to quaternary structure, part of the 30S ribosomal subunit. Contacts proteins S3 and S10.

In terms of biological role, binds 16S rRNA, required for the assembly of 30S particles and may also be responsible for determining the conformation of the 16S rRNA at the A site. The sequence is that of Small ribosomal subunit protein uS14 from Methylorubrum populi (strain ATCC BAA-705 / NCIMB 13946 / BJ001) (Methylobacterium populi).